The sequence spans 404 residues: UPF0674 endoplasmic reticulum membrane protein YNR021W (404 aa).

Serine 2 is subject to N-acetylserine. The N-linked (GlcNAc...) asparagine glycan is linked to asparagine 44. Residues 49–68 traverse the membrane as a helical segment; that stretch reads LCALGVLFLVYAFYKFGNSV. Asparagine 98 carries N-linked (GlcNAc...) asparagine glycosylation. The segment at 369-404 is disordered; that stretch reads AKRRQLKASGQQEKVDQKMKEKRERRLKNKQRTRFQ. A compositionally biased stretch (basic and acidic residues) spans 381–392; the sequence is EKVDQKMKEKRE. Over residues 393–404 the composition is skewed to basic residues; sequence RRLKNKQRTRFQ.

This sequence belongs to the UPF0674 family.

It is found in the endoplasmic reticulum membrane. The protein is UPF0674 endoplasmic reticulum membrane protein YNR021W of Saccharomyces cerevisiae (strain ATCC 204508 / S288c) (Baker's yeast).